The primary structure comprises 216 residues: Ribosomal RNA small subunit methyltransferase G (216 aa).

Residues G73, L78, 124 to 125 (AE), and R139 each bind S-adenosyl-L-methionine.

This sequence belongs to the methyltransferase superfamily. RNA methyltransferase RsmG family.

The protein localises to the cytoplasm. Its function is as follows. Specifically methylates the N7 position of guanine in position 518 of 16S rRNA. In Paenarthrobacter aurescens (strain TC1), this protein is Ribosomal RNA small subunit methyltransferase G.